The following is a 288-amino-acid chain: NAD kinase (288 aa).

Asp70 functions as the Proton acceptor in the catalytic mechanism. NAD(+) is bound by residues 70–71, 144–145, Arg155, Lys172, Asp174, 185–190, and Gln245; these read DG, ND, and TGYSLS.

This sequence belongs to the NAD kinase family. A divalent metal cation is required as a cofactor.

Its subcellular location is the cytoplasm. The catalysed reaction is NAD(+) + ATP = ADP + NADP(+) + H(+). Its function is as follows. Involved in the regulation of the intracellular balance of NAD and NADP, and is a key enzyme in the biosynthesis of NADP. Catalyzes specifically the phosphorylation on 2'-hydroxyl of the adenosine moiety of NAD to yield NADP. The polypeptide is NAD kinase (Geobacter sp. (strain M21)).